The sequence spans 264 residues: Acyl-[acyl-carrier-protein]--UDP-N-acetylglucosamine O-acyltransferase (264 aa).

It belongs to the transferase hexapeptide repeat family. LpxA subfamily. In terms of assembly, homotrimer.

It is found in the cytoplasm. The catalysed reaction is a (3R)-hydroxyacyl-[ACP] + UDP-N-acetyl-alpha-D-glucosamine = a UDP-3-O-[(3R)-3-hydroxyacyl]-N-acetyl-alpha-D-glucosamine + holo-[ACP]. Its pathway is glycolipid biosynthesis; lipid IV(A) biosynthesis; lipid IV(A) from (3R)-3-hydroxytetradecanoyl-[acyl-carrier-protein] and UDP-N-acetyl-alpha-D-glucosamine: step 1/6. Functionally, involved in the biosynthesis of lipid A, a phosphorylated glycolipid that anchors the lipopolysaccharide to the outer membrane of the cell. In Rickettsia canadensis (strain McKiel), this protein is Acyl-[acyl-carrier-protein]--UDP-N-acetylglucosamine O-acyltransferase.